Consider the following 686-residue polypeptide: DNA ligase 2 (686 aa).

Residues Asp-37–Asp-41, Ser-86–Leu-87, and Glu-121 contribute to the NAD(+) site. Lys-123 (N6-AMP-lysine intermediate) is an active-site residue. 4 residues coordinate NAD(+): Arg-144, Glu-179, Lys-295, and Lys-319. Positions 413, 416, 431, and 436 each coordinate Zn(2+). The 89-residue stretch at Val-593–Ser-681 folds into the BRCT domain.

It belongs to the NAD-dependent DNA ligase family. LigA subfamily. Mg(2+) serves as cofactor. It depends on Mn(2+) as a cofactor.

The enzyme catalyses NAD(+) + (deoxyribonucleotide)n-3'-hydroxyl + 5'-phospho-(deoxyribonucleotide)m = (deoxyribonucleotide)n+m + AMP + beta-nicotinamide D-nucleotide.. DNA ligase that catalyzes the formation of phosphodiester linkages between 5'-phosphoryl and 3'-hydroxyl groups in double-stranded DNA using NAD as a coenzyme and as the energy source for the reaction. It is essential for DNA replication and repair of damaged DNA. This is DNA ligase 2 from Deinococcus deserti (strain DSM 17065 / CIP 109153 / LMG 22923 / VCD115).